The sequence spans 286 residues: ATP phosphoribosyltransferase (286 aa).

It belongs to the ATP phosphoribosyltransferase family. Long subfamily. The cofactor is Mg(2+).

The protein resides in the cytoplasm. The enzyme catalyses 1-(5-phospho-beta-D-ribosyl)-ATP + diphosphate = 5-phospho-alpha-D-ribose 1-diphosphate + ATP. Its pathway is amino-acid biosynthesis; L-histidine biosynthesis; L-histidine from 5-phospho-alpha-D-ribose 1-diphosphate: step 1/9. Its activity is regulated as follows. Feedback inhibited by histidine. Its function is as follows. Catalyzes the condensation of ATP and 5-phosphoribose 1-diphosphate to form N'-(5'-phosphoribosyl)-ATP (PR-ATP). Has a crucial role in the pathway because the rate of histidine biosynthesis seems to be controlled primarily by regulation of HisG enzymatic activity. This is ATP phosphoribosyltransferase from Cytophaga hutchinsonii (strain ATCC 33406 / DSM 1761 / CIP 103989 / NBRC 15051 / NCIMB 9469 / D465).